Reading from the N-terminus, the 476-residue chain is MKIMFVAAEGAPFAKTGGLGDVIGALPKSLVKNGHEVFVILPYYDVVDQAFGHQVEDVLYFYTQVGWRRQYVGIKKLVKDKVTFYFIDNQAYFFRGRIYGDWDDGERFAYFQLAAIEAMEKIGVIPDILHVHDYHTAMIPFLLKEKYHWIQAYQAIRTVFTIHNIAFQGQFDPGMLGDLFGVGIGRYEDGTLRWHDCLNWMKAAVLYADRVTTVSPSYAHEIQTPAFGQGLDQVMRMEAGKLSGIVNGIDTDLFNPARDPHLPASFSAEDLSGKAATKQVLQERLGLPVRADVPLIGMVSRLTDQKGFQLVLEELSHILQQDVQLVLLGTGDPDYEAAFSWFAKAYPEKLSANITFDLPLAQQIYGACDLFLMPSAFEPCGLSQMMAMRYGAIPIVHEIGGLKDTVASYNAYEKTGTGFGFDQFSGFWLTQTLLFALDIYHNHKEDWQTIQQHAMTKDFSWDTASLAYLDLYKSLL.

Lysine 15 is an ADP-alpha-D-glucose binding site.

The protein belongs to the glycosyltransferase 1 family. Bacterial/plant glycogen synthase subfamily.

The enzyme catalyses [(1-&gt;4)-alpha-D-glucosyl](n) + ADP-alpha-D-glucose = [(1-&gt;4)-alpha-D-glucosyl](n+1) + ADP + H(+). It participates in glycan biosynthesis; glycogen biosynthesis. In terms of biological role, synthesizes alpha-1,4-glucan chains using ADP-glucose. The chain is Glycogen synthase from Streptococcus equi subsp. zooepidemicus (strain H70).